The following is a 533-amino-acid chain: Tryptophan N-monooxygenase CYP79A68 (533 aa).

Residues 12-32 (VTPPISLSLAFIIFMFLVKFI) traverse the membrane as a helical segment. Asn209 is a glycosylation site (N-linked (GlcNAc...) asparagine). Cys471 serves as a coordination point for heme.

It belongs to the cytochrome P450 family. The cofactor is heme. In terms of tissue distribution, confined to buds.

Its subcellular location is the membrane. It catalyses the reaction L-tryptophan + 2 reduced [NADPH--hemoprotein reductase] + 2 O2 = (E)-(indol-3-yl)acetaldehyde oxime + 2 oxidized [NADPH--hemoprotein reductase] + CO2 + 3 H2O + 2 H(+). Functionally, catalyzes with low efficiency E and Z isomers of indole-3-acetaldoxime from tryptophan (Trp). This chain is Tryptophan N-monooxygenase CYP79A68, found in Prunus mume (Japanese apricot).